The chain runs to 778 residues: IQ domain-containing protein E (778 aa).

Disordered regions lie at residues 1–71 (MSLG…LSSR) and 83–108 (SSKQGSVAQPPSPTLTSEHAWTHPPS). Residues 37–49 (KPPSTSPKSPYYS) are compositionally biased toward low complexity. Polar residues predominate over residues 83 to 101 (SSKQGSVAQPPSPTLTSEH). Residues 157 to 323 (LHMQKSDVDL…DLDRMLSNSP (167 aa)) are a coiled coil. A Phosphoserine modification is found at S322. Disordered regions lie at residues 348-392 (KKVS…EDLP), 443-462 (ETAREGEKGRQEQEQALREE), 474-529 (EEAK…SEER), and 573-612 (LVRSKVPDSRSPSLPGLLSPLNQSSPAPRVLSPISPAEEN). The segment covering 352-362 (SSESPKQSTSE) has biased composition (low complexity). The stretch at 398–486 (EEQEHLQGTV…KREEKNSFVA (89 aa)) forms a coiled coil. IQ domains are found at residues 553–582 (LDEAATVLQAAFRGHLARSKLVRSKVPDSR) and 615–644 (QEEAVIVIQSILRGYLAQARFIASCCREIA). The span at 581–598 (SRSPSLPGLLSPLNQSSP) shows a compositional bias: low complexity. A compositionally biased stretch (polar residues) spans 651 to 662 (TVSLTPSGSASP). The disordered stretch occupies residues 651–778 (TVSLTPSGSA…LPRKKSPSPF (128 aa)). S661 carries the phosphoserine modification. Positions 672 to 686 (IRKELCASEELRETS) are enriched in basic and acidic residues. Positions 739-752 (PSPPELQPLSPPPV) are enriched in pro residues.

As to quaternary structure, component of the EvC complex composed of EFCAB7, IQCE, EVC2 and EVC; built from two subcomplexes, EVC2:EVC and EFCAB7:IQCE. Interacts (via N-terminus) with EFCAB7 (via EF-hands 1 and 2); this interaction anchors the EVC-EVC2 complex in a signaling microdomain at the base of cilia and stimulates the Hedgehog (Hh) pathway. Interacts with EVC2 (via N-terminal end). Interacts with EVC.

It localises to the cell projection. Its subcellular location is the cilium membrane. Its function is as follows. Component of the EvC complex that positively regulates ciliary Hedgehog (Hh) signaling. Required for proper limb morphogenesis. The chain is IQ domain-containing protein E (Iqce) from Mus musculus (Mouse).